Consider the following 217-residue polypeptide: Probable coenzyme A transferase subunit beta (217 aa).

E50 is a catalytic residue.

Belongs to the 3-oxoacid CoA-transferase subunit B family. In terms of assembly, heterodimer of a subunit alpha and a subunit beta.

In Bacillus subtilis (strain 168), this protein is Probable coenzyme A transferase subunit beta (yodR).